A 473-amino-acid chain; its full sequence is Dynein axonemal assembly factor 11 (473 aa).

LRR repeat units follow at residues 22 to 43 (SLEE…DKWC), 45 to 66 (DLKI…SKLK), 67 to 88 (KLEY…EGCE), and 89 to 110 (WLTK…KTLT). Residues 123–161 (NPCADFDGYRQFVVVTLQQLKWLDGKEIERSERIQALQN) enclose the LRRCT domain. Residues 153–205 (SERIQALQNYTSVEQQIREQEKAYCLRRAKEKEEAQRKLEEENESEDKKKSST) are a coiled coil. 2 stretches are compositionally biased toward basic and acidic residues: residues 188-202 (QRKL…DKKK) and 273-283 (EKQRKAQDKLS). Disordered regions lie at residues 188 to 244 (QRKL…TKES), 273 to 292 (EKQR…AKPP), and 387 to 473 (VGEM…PPLI). The CS domain maps to 305 to 402 (VNEAKLDFSL…GGQRTPTSVK (98 aa)). The segment covering 397–408 (TPTSVKTTSTSS) has biased composition (low complexity). Residues 417 to 431 (KQIERLEVDPSKHSC) are compositionally biased toward basic and acidic residues. Over residues 456 to 467 (PSEEDPDFEDNP) the composition is skewed to acidic residues.

This sequence belongs to the tilB family. As to quaternary structure, interacts (via CS domain) with ZMYND10 (via C-terminus). As to expression, mainly expressed in cells with motile cilia. Expressed in epithelial cells of the trachea, testis and ependymal cells of the cerebral ventricles. In testis, abundant expression in late prophase of meiosis I with a dramatic decrease after the first meiotic division (at protein level).

Its subcellular location is the cytoplasm. The protein resides in the cell projection. The protein localises to the cilium. It localises to the dynein axonemal particle. It is found in the flagellum. Functionally, involved in dynein arm assembly, is important for expression and transporting outer dynein arm (ODA) proteins from the cytoplasm to the cilia. Acts as a crucial component in the formation and motility of spermatozoal flagella. This chain is Dynein axonemal assembly factor 11 (Dnaaf11), found in Mus musculus (Mouse).